The primary structure comprises 275 residues: Non-heme chloroperoxidase CPO-A1 (275 aa).

Residues 22–255 (PVVFIHGWPL…KVYEGSSHGI (234 aa)) form the AB hydrolase-1 domain. Active-site charge relay system residues include S95, D224, and H253.

Belongs to the AB hydrolase superfamily. Bacterial non-heme haloperoxidase / perhydrolase family. Homodimer.

Brominating activity not inhibited by azide, peroxidase activity stimulated by bromide. Functionally, may be a chlorinating enzyme involved in 7-chlorotetracycline biosynthesis. Able to brominate as well. The sequence is that of Non-heme chloroperoxidase CPO-A1 (bpoA1) from Kitasatospora aureofaciens (Streptomyces aureofaciens).